The primary structure comprises 276 residues: Shikimate dehydrogenase (NADP(+)) (276 aa).

Shikimate contacts are provided by residues 18–20 and threonine 65; that span reads SKS. Lysine 69 functions as the Proton acceptor in the catalytic mechanism. Residue glutamate 81 coordinates NADP(+). Shikimate contacts are provided by asparagine 90 and aspartate 106. NADP(+) contacts are provided by residues 130–134, 154–159, and methionine 217; these read GAGGA and NRTSSK. A shikimate-binding site is contributed by tyrosine 219. Glycine 241 is an NADP(+) binding site.

Belongs to the shikimate dehydrogenase family. As to quaternary structure, homodimer.

The catalysed reaction is shikimate + NADP(+) = 3-dehydroshikimate + NADPH + H(+). It participates in metabolic intermediate biosynthesis; chorismate biosynthesis; chorismate from D-erythrose 4-phosphate and phosphoenolpyruvate: step 4/7. Involved in the biosynthesis of the chorismate, which leads to the biosynthesis of aromatic amino acids. Catalyzes the reversible NADPH linked reduction of 3-dehydroshikimate (DHSA) to yield shikimate (SA). This is Shikimate dehydrogenase (NADP(+)) from Vibrio atlanticus (strain LGP32) (Vibrio splendidus (strain Mel32)).